Reading from the N-terminus, the 145-residue chain is Large ribosomal subunit protein uL15 (145 aa).

The segment at 1 to 52 is disordered; that stretch reads MFNLLKPKGASKRRKIVGRGPGSGLGKTSGRGQKGQKARNTSPRLGFEGGQT. Residues 19 to 33 are compositionally biased toward gly residues; sequence RGPGSGLGKTSGRGQ.

The protein belongs to the universal ribosomal protein uL15 family. Part of the 50S ribosomal subunit.

In terms of biological role, binds to the 23S rRNA. This chain is Large ribosomal subunit protein uL15, found in Borreliella burgdorferi (strain ATCC 35210 / DSM 4680 / CIP 102532 / B31) (Borrelia burgdorferi).